The primary structure comprises 450 residues: FAD-linked oxidoreductase ptmO (450 aa).

The region spanning 32–203 is the FAD-binding PCMH-type domain; it reads PPELPYAIVR…TRFFIRTRPA (172 aa).

This sequence belongs to the oxygen-dependent FAD-linked oxidoreductase family. Requires FAD as cofactor.

It participates in secondary metabolite biosynthesis. In terms of biological role, FAD-linked oxidoreductase; part of the gene cluster that mediates the biosynthesis of the indole diterpenes penitrems. The geranylgeranyl diphosphate (GGPP) synthase ptmG catalyzes the first step in penitrem biosynthesis via conversion of farnesyl pyrophosphate and isopentyl pyrophosphate into geranylgeranyl pyrophosphate (GGPP). Condensation of indole-3-glycerol phosphate with GGPP by the prenyl transferase ptmC then forms 3-geranylgeranylindole (3-GGI). Epoxidation by the FAD-dependent monooxygenase ptmM leads to a epoxidized-GGI that is substrate of the terpene cyclase ptmB for cyclization to yield paspaline. Paspaline is subsequently converted to 13-desoxypaxilline by the cytochrome P450 monooxygenase ptmP, the latter being then converted to paxilline by the cytochrome P450 monooxygenase ptmQ. Paxilline is converted to beta-paxitriol via C-10 ketoreduction by the short-chain dehydrogenase ptmH which can be monoprenylated at the C-20 by the indole diterpene prenyltransferase ptmD. A two-step elimination (acetylation and elimination) process performed by the O-acetyltransferase ptmV and ptmI leads to the production of the prenylated form of penijanthine. The FAD-linked oxidoreductase ptmO then converts the prenylated form of penijanthine into PC-M5 which is in turn transformed into PC-M4 by the aromatic dimethylallyltransferase ptmE. Five sequential oxidative transformations performed by the cytochrome P450 monooxygenases ptmK, ptmU, ptmL, ptmN and ptmJ yield the various penitrem compounds. PtmK, ptmU and ptmM are involved in the formation of the key bicyclic ring of penitrem C via the formation of the intermediates secopenitrem D and penitrem D. PtmL catalyzes the epoxidation of penitrem D and C to yield penitrem B and F, respectively. PtmJ catalyzes the last benzylic hydroxylation to convert penitrem B to prenitrem E and penitrem F to penitrem A. The chain is FAD-linked oxidoreductase ptmO from Penicillium ochrochloron.